The following is a 256-amino-acid chain: Galactitol 2-dehydrogenase (256 aa).

NAD(+) contacts are provided by residues 15-17, Asp36, 59-60, Asn86, Tyr152, and Lys156; these read RGI and DV. The active-site Proton acceptor is Tyr152.

It belongs to the short-chain dehydrogenases/reductases (SDR) family.

The enzyme catalyses galactitol + NAD(+) = keto-D-tagatose + NADH + H(+). The catalysed reaction is keto-D-fructose + NADH + H(+) = D-sorbitol + NAD(+). The protein operates within carbohydrate metabolism. In terms of biological role, involved in galactitol catabolism. Catalyzes the oxidation of galactitol to D-tagatose. Can also catalyze the oxidation of D-sorbitol to D-fructose. This chain is Galactitol 2-dehydrogenase, found in Agrobacterium fabrum (strain C58 / ATCC 33970) (Agrobacterium tumefaciens (strain C58)).